Here is a 438-residue protein sequence, read N- to C-terminus: DNA primase DnaG (438 aa).

Residues 169–243 (DSIIVVEGRA…DIDYVARAPY (75 aa)) form the Toprim domain. 3 residues coordinate Mg(2+): Glu-175, Asp-217, and Asp-219.

This sequence belongs to the archaeal DnaG primase family. In terms of assembly, forms a ternary complex with MCM helicase and DNA. The cofactor is Mg(2+).

The catalysed reaction is ssDNA + n NTP = ssDNA/pppN(pN)n-1 hybrid + (n-1) diphosphate.. Functionally, RNA polymerase that catalyzes the synthesis of short RNA molecules used as primers for DNA polymerase during DNA replication. This is DNA primase DnaG from Methanococcus maripaludis (strain C6 / ATCC BAA-1332).